The sequence spans 480 residues: Lysostaphin (480 aa).

Residues 1–23 form the signal peptide; the sequence is MKKTKNNYYTTPLAIGLSTFALA. Positions 24-234 are excised as a propeptide; sequence SIVYGGIQNE…ALVQNRTALR (211 aa). 13 consecutive repeat copies span residues 49–61, 62–74, 75–87, 88–100, 101–113, 114–126, 127–139, 140–152, 153–165, 166–178, 179–191, 192–204, and 205–217. The segment at 49–230 is 14 X 13 AA tandem repeats of A-E-V-E-T-S-K-[AP]-P-V-E-N-T; that stretch reads AEVETSKPPV…ETSKALVQNR (182 aa). The segment at 51–219 is disordered; it reads VETSKPPVEN…SKAPVENTAE (169 aa). One copy of the 14; approximate repeat lies at 218 to 230; that stretch reads AEVETSKALVQNR. Positions 266 and 270 each coordinate Zn(2+). Residue H347 is part of the active site. H349 provides a ligand contact to Zn(2+). Residues 400–468 form the SH3b domain; it reads SESASFTPNT…YLPVRTWNKS (69 aa).

Belongs to the peptidase M23B family. Monomer. Requires Zn(2+) as cofactor.

The protein resides in the secreted. The enzyme catalyses Hydrolysis of the -Gly-|-Gly- bond in the pentaglycine inter-peptide link joining staphylococcal cell wall peptidoglycans.. In terms of biological role, lyses staphylococcal cells by hydrolyzing the polyglycine interpeptide bridges of the peptidoglycan. The sequence is that of Lysostaphin (lss) from Staphylococcus staphylolyticus.